The primary structure comprises 298 residues: 1D-myo-inositol 2-acetamido-2-deoxy-alpha-D-glucopyranoside deacetylase (298 aa).

The Zn(2+) site is built by His14, Asp17, and His148. Residues 277–298 (RGPAGPDGREHDLFAGLDGPAT) form a disordered region.

It belongs to the MshB deacetylase family. It depends on Zn(2+) as a cofactor.

The catalysed reaction is 1D-myo-inositol 2-acetamido-2-deoxy-alpha-D-glucopyranoside + H2O = 1D-myo-inositol 2-amino-2-deoxy-alpha-D-glucopyranoside + acetate. In terms of biological role, catalyzes the deacetylation of 1D-myo-inositol 2-acetamido-2-deoxy-alpha-D-glucopyranoside (GlcNAc-Ins) in the mycothiol biosynthesis pathway. This chain is 1D-myo-inositol 2-acetamido-2-deoxy-alpha-D-glucopyranoside deacetylase, found in Nocardia farcinica (strain IFM 10152).